An 861-amino-acid polypeptide reads, in one-letter code: DNA mismatch repair protein MutS (861 aa).

613 to 620 (GPNMGGKS) contributes to the ATP binding site.

It belongs to the DNA mismatch repair MutS family.

This protein is involved in the repair of mismatches in DNA. It is possible that it carries out the mismatch recognition step. This protein has a weak ATPase activity. This chain is DNA mismatch repair protein MutS, found in Dichelobacter nodosus (strain VCS1703A).